A 479-amino-acid polypeptide reads, in one-letter code: BRAP2 RING ZnF UBP domain-containing protein 2 (479 aa).

Residues 167-207 (CPVCLERLDQDTGGILTTMCNHSFHCSCISNWPDSSCPVCR) form an RING-type; atypical zinc finger. The UBP-type; degenerate zinc finger occupies 201-294 (SSCPVCRYCQ…GKLVELNSHG (94 aa)). Zn(2+) is bound by residues cysteine 218, cysteine 221, cysteine 230, cysteine 233, cysteine 238, histidine 245, histidine 249, and histidine 255. Residues 328–442 (NELLQAQLEN…MAQMDGESEV (115 aa)) are a coiled coil. The tract at residues 434–479 (AQMDGESEVSETKEVQDATVSTTNTSSSGAGNVIHANKKKSNRRKG) is disordered. Low complexity predominate over residues 451–466 (ATVSTTNTSSSGAGNV). The segment covering 469–479 (ANKKKSNRRKG) has biased composition (basic residues).

As to quaternary structure, component of the heteromeric E3 ligase complex made of BRIZ1 and BRIZ2. Forms heterooligomers with BRIZ1 via coiled-coil domains.

The catalysed reaction is S-ubiquitinyl-[E2 ubiquitin-conjugating enzyme]-L-cysteine + [acceptor protein]-L-lysine = [E2 ubiquitin-conjugating enzyme]-L-cysteine + N(6)-ubiquitinyl-[acceptor protein]-L-lysine.. It participates in protein modification; protein ubiquitination. Its function is as follows. RING-type ubiquitin E3 ligase that binds ubiquitin and is required for seed germination and post-germination growth. The protein is BRAP2 RING ZnF UBP domain-containing protein 2 of Arabidopsis thaliana (Mouse-ear cress).